The following is a 28-amino-acid chain: Small integral membrane protein 47 (28 aa).

Residues 7 to 24 traverse the membrane as a helical segment; sequence VTLAMALFTILTSIYFFN.

The protein resides in the membrane. The chain is Small integral membrane protein 47 from Homo sapiens (Human).